Reading from the N-terminus, the 274-residue chain is Thiazole synthase (274 aa).

Lys-115 (schiff-base intermediate with DXP) is an active-site residue. Residues Gly-176, 202–203, and 224–225 contribute to the 1-deoxy-D-xylulose 5-phosphate site; these read AG and NS.

This sequence belongs to the ThiG family. In terms of assembly, homotetramer. Forms heterodimers with either ThiH or ThiS.

The protein localises to the cytoplasm. It carries out the reaction [ThiS sulfur-carrier protein]-C-terminal-Gly-aminoethanethioate + 2-iminoacetate + 1-deoxy-D-xylulose 5-phosphate = [ThiS sulfur-carrier protein]-C-terminal Gly-Gly + 2-[(2R,5Z)-2-carboxy-4-methylthiazol-5(2H)-ylidene]ethyl phosphate + 2 H2O + H(+). The protein operates within cofactor biosynthesis; thiamine diphosphate biosynthesis. Its function is as follows. Catalyzes the rearrangement of 1-deoxy-D-xylulose 5-phosphate (DXP) to produce the thiazole phosphate moiety of thiamine. Sulfur is provided by the thiocarboxylate moiety of the carrier protein ThiS. In vitro, sulfur can be provided by H(2)S. The sequence is that of Thiazole synthase from Psychrobacter cryohalolentis (strain ATCC BAA-1226 / DSM 17306 / VKM B-2378 / K5).